Here is a 184-residue protein sequence, read N- to C-terminus: Peptide deformylase 2 (184 aa).

Fe cation-binding residues include C110 and H153. Residue E154 is part of the active site. H157 contacts Fe cation.

The protein belongs to the polypeptide deformylase family. Fe(2+) serves as cofactor.

It carries out the reaction N-terminal N-formyl-L-methionyl-[peptide] + H2O = N-terminal L-methionyl-[peptide] + formate. In terms of biological role, removes the formyl group from the N-terminal Met of newly synthesized proteins. Requires at least a dipeptide for an efficient rate of reaction. N-terminal L-methionine is a prerequisite for activity but the enzyme has broad specificity at other positions. This chain is Peptide deformylase 2, found in Bacillus cereus (strain ATCC 14579 / DSM 31 / CCUG 7414 / JCM 2152 / NBRC 15305 / NCIMB 9373 / NCTC 2599 / NRRL B-3711).